We begin with the raw amino-acid sequence, 389 residues long: Homoserine O-acetyltransferase (389 aa).

The 309-residue stretch at Asn63–Leu371 folds into the AB hydrolase-1 domain. Ser168 acts as the Nucleophile in catalysis. Arg240 lines the substrate pocket. Active-site residues include Asp334 and His367. Asp368 serves as a coordination point for substrate.

It belongs to the AB hydrolase superfamily. MetX family. As to quaternary structure, homodimer.

It is found in the cytoplasm. The enzyme catalyses L-homoserine + acetyl-CoA = O-acetyl-L-homoserine + CoA. It functions in the pathway amino-acid biosynthesis; L-methionine biosynthesis via de novo pathway; O-acetyl-L-homoserine from L-homoserine: step 1/1. In terms of biological role, transfers an acetyl group from acetyl-CoA to L-homoserine, forming acetyl-L-homoserine. This chain is Homoserine O-acetyltransferase, found in Clavibacter michiganensis subsp. michiganensis (strain NCPPB 382).